Reading from the N-terminus, the 325-residue chain is Zinc finger C2HC domain-containing protein 1A (325 aa).

Residues 15-44 (ELLPCKICGRTFFPVALKKHGPICQKTATK) form a C2HC/C3H-type 1 zinc finger. Zn(2+) is bound by residues Cys-19, Cys-22, His-34, and Cys-38. Residues 43–83 (TKKRKTFDSSRQRAEGTDIPTVKPLKPRPEPPKKPSNWRRK) form a disordered region. The segment covering 48-58 (TFDSSRQRAEG) has biased composition (basic and acidic residues). Residues 118–147 (DYIQCPYCQRRFNENAADRHINFCKEQAAR) form a C2HC/C3H-type 2 zinc finger. Residues Cys-122, Cys-125, His-137, and Cys-141 each contribute to the Zn(2+) site. The tract at residues 150-260 (NKGKFSTDTK…NPAPGVLTNK (111 aa)) is disordered. Low complexity-rich tracts occupy residues 177 to 188 (SNSPGTASSGSS) and 197 to 216 (GKTV…SSLG). Residue Ser-223 is modified to Phosphoserine. At Thr-244 the chain carries Phosphothreonine. Ser-292 carries the post-translational modification Phosphoserine.

This sequence belongs to the ZC2HC1 family. The cofactor is Zn(2+).

The protein is Zinc finger C2HC domain-containing protein 1A (ZC2HC1A) of Homo sapiens (Human).